We begin with the raw amino-acid sequence, 375 residues long: Glutamate 5-kinase (375 aa).

Lys-17 lines the ATP pocket. The substrate site is built by Ser-57, Asp-144, and Asn-158. Thr-178–Asp-179 contributes to the ATP binding site. The PUA domain occupies Ser-284 to Lys-360.

This sequence belongs to the glutamate 5-kinase family.

The protein localises to the cytoplasm. The catalysed reaction is L-glutamate + ATP = L-glutamyl 5-phosphate + ADP. The protein operates within amino-acid biosynthesis; L-proline biosynthesis; L-glutamate 5-semialdehyde from L-glutamate: step 1/2. In terms of biological role, catalyzes the transfer of a phosphate group to glutamate to form L-glutamate 5-phosphate. The protein is Glutamate 5-kinase of Methanococcoides burtonii (strain DSM 6242 / NBRC 107633 / OCM 468 / ACE-M).